The sequence spans 181 residues: Oligoribonuclease (181 aa).

The 164-residue stretch at Leu-8 to Leu-171 folds into the Exonuclease domain. Tyr-129 is a catalytic residue.

Belongs to the oligoribonuclease family. In terms of assembly, homodimer.

It localises to the cytoplasm. Its function is as follows. 3'-to-5' exoribonuclease specific for small oligoribonucleotides. This chain is Oligoribonuclease, found in Escherichia coli O157:H7.